A 213-amino-acid polypeptide reads, in one-letter code: Motile sperm domain-containing protein 1 (213 aa).

An MSP domain is found at 16-143 (PVFVFPTELI…KEHLTESLFF (128 aa)). 2 consecutive transmembrane segments (helical) span residues 159–179 (SLLT…PTLG) and 191–211 (LSVN…MAIF). A Nuclear export signal motif is present at residues 205–208 (LITM).

It localises to the endoplasmic reticulum membrane. The protein localises to the golgi apparatus membrane. In terms of biological role, plays a role in differentiation and/or proliferation of mesenchymal stem cells. Proposed to be involved in epithelial-to-mesenchymal transition (EMT). However, another study suggests that it is not required for EMT or stem cell self-renewal and acts during later stages of differentiation. The polypeptide is Motile sperm domain-containing protein 1 (MOSPD1) (Bos taurus (Bovine)).